The primary structure comprises 892 residues: MPNFTGNTRPDPTLFEPAAFAKWIDTSEAPLLLLRSFLKEGIENLKQRFLTGTSAAELLPLHAWLVDQILVQACRLHTKKCPERVALVAVGGYGRGTLHPYSDIDILLLLTEETDSILQNSIGHFISFLWDTGLEMGHSVRTVAECQQAARDDLSFITSLMEARLLFGPELLFKNLQTAIAPEQIWNSRQFFLAKQAEQITRHHKYHDTAYNLEPNLKEGPGGLRDIQMIQWVSKRYFNTWSFDSLLQHDFLTVSERKELLESQSFLWQLRYGLHTLTGRREDRLLFDHQIALAKQLGYHDQGPHLAVEQLMKDYYRTAENTGRLNEMLLQLLEERILLVDAKVHVRPINERFQARNGFLEVINPSVFKHTPSALLEVFLLLQQHPEIKGVRASTIRLIREHRHLIDDNFRADSFNRALFMEIMRQSRGITRELRRMNKYGILGAYLPVFGKIVGQMQYDMFHAYTVDEHTLFLIHNLRRFALPKYAQELPLCSEIFQRISKPELLYLAGLFHDIAKGRGGDHSKLGAKDALRFCLYHGLSRDDSRLVAWLVAHHLLMSMTAQRRDINDPKVIQRFAREVGDERRLNHLYLLTAADIRATNPNLWNSWKDALLNKLYTATQQALRQGLEYPVDKKEHIRDIQNEARQALLKDGWTEQKLDILWSQIDADYFLRHTPNEIRWHIKALAQKEPHDGAPRILVRIHNQEPGTMEVFIYARAHALIFTVTTRTMAQLDLDVLDARIITTGHGFVLESFVVREAATIRAEADLEFRLQEIQEVLTQRLTQPDRAPPYRPGFIPRKLKLFKFPTTITFTKDRRNQCTVMELTTNNWPGLLSRVCRALASCQVRLVNAKITTLGTQVVDVFFICNQQDKPLTPEQQQQLKEAIYTYLER.

Positions 1–348 (MPNFTGNTRP…LVDAKVHVRP (348 aa)) are uridylyltransferase. The interval 349-710 (INERFQARNG…RIHNQEPGTM (362 aa)) is uridylyl-removing. The HD domain occupies 467–589 (VDEHTLFLIH…VGDERRLNHL (123 aa)). ACT domains follow at residues 711 to 786 (EVFI…LTQP) and 822 to 892 (VMEL…YLER).

Belongs to the GlnD family. The cofactor is Mg(2+).

The enzyme catalyses [protein-PII]-L-tyrosine + UTP = [protein-PII]-uridylyl-L-tyrosine + diphosphate. It catalyses the reaction [protein-PII]-uridylyl-L-tyrosine + H2O = [protein-PII]-L-tyrosine + UMP + H(+). With respect to regulation, uridylyltransferase (UTase) activity is inhibited by glutamine, while glutamine activates uridylyl-removing (UR) activity. Modifies, by uridylylation and deuridylylation, the PII regulatory proteins (GlnB and homologs), in response to the nitrogen status of the cell that GlnD senses through the glutamine level. Under low glutamine levels, catalyzes the conversion of the PII proteins and UTP to PII-UMP and PPi, while under higher glutamine levels, GlnD hydrolyzes PII-UMP to PII and UMP (deuridylylation). Thus, controls uridylylation state and activity of the PII proteins, and plays an important role in the regulation of nitrogen assimilation and metabolism. The chain is Bifunctional uridylyltransferase/uridylyl-removing enzyme from Nitrosococcus oceani (strain ATCC 19707 / BCRC 17464 / JCM 30415 / NCIMB 11848 / C-107).